Here is a 427-residue protein sequence, read N- to C-terminus: ETS domain-containing protein Elk-1 (427 aa).

A DNA-binding region (ETS) is located at residues 5 to 86 (VTLWQFLLQL…SGQKFVYKFV (82 aa)). Disordered stretches follow at residues 116 to 146 (ATVHSGPGDNATGKPGTPKGAGMTGQGGLAR), 166 to 202 (LQPQPPLHPRPASVLPNTTPAGVPAPPSGSRSTSPNP), and 226 to 252 (PNQKSEELSLNPGFGRPQPPEVKVEGP). Residues Lys229, Lys248, and Lys253 each participate in a glycyl lysine isopeptide (Lys-Gly) (interchain with G-Cter in SUMO) cross-link. Residues 300-310 (STSTTEITQPQ) show a composition bias toward polar residues. Residues 300-350 (STSTTEITQPQKGRKPRDLELPLSPSLLGGQGPERTPGSGTSSGLQAQGPA) are disordered. Residue Ser323 is modified to Phosphoserine; by MAPK1. A phosphothreonine; by MAPK1 mark is found at Thr335, Thr352, Thr362, and Thr367. Residues 348–398 (GPALTPSLLPTHTLTPVLLTPSSLPPSIHFWSTLSPIAPRSPAKLSFQFPS) form a sufficient for interaction with MAD2L2 region. O-linked (GlcNAc) threonine glycosylation is present at Thr380. Ser382 carries the post-translational modification Phosphoserine; by MAPK1 and MAPK8. The residue at position 388 (Ser388) is a Phosphoserine; by MAPK1. The residue at position 416 (Thr416) is a Phosphothreonine; by MAPK1. A Phosphoserine; by MAPK1 modification is found at Ser421.

This sequence belongs to the ETS family. In terms of assembly, interacts in its sumoylated form with PIAS2/PIASX which enhances its transcriptional activator activity. Interacts with MAD2L2; the interaction is direct and promotes phosphorylation by the kinases MAPK8 and/or MAPK9. Interacts with POU1F1. Sumoylation represses transcriptional activator activity as it results in recruitment of HDAC2 to target gene promoters which leads to decreased histone acetylation and reduced transactivator activity. It also regulates nuclear retention. Post-translationally, on mitogenic stimulation, phosphorylated on C-terminal serine and threonine residues by MAPK1. Ser-382 and Ser-388 are the preferred sites for MAPK1. In vitro, phosphorylation by MAPK1 potentiates ternary complex formation with the serum responses factors, SRE and SRF. Also phosphorylated on Ser-382 by MAPK8 and/or MAKP9. Phosphorylation leads to loss of sumoylation and restores transcriptional activator activity. Phosphorylated and activated by CAMK4, MAPK11, MAPK12 and MAPK14. Upon bFGF stimulus, phosphorylated by PAK1. Phosphorylated by PRP4K at Thr-416; phosphorylation activation ELK1 transcriptional activity.

It is found in the nucleus. Transcription factor that binds to purine-rich DNA sequences. Forms a ternary complex with SRF and the ETS and SRF motifs of the serum response element (SRE) on the promoter region of immediate early genes such as FOS and IER2. Induces target gene transcription upon JNK and MAPK-signaling pathways stimulation. This is ETS domain-containing protein Elk-1 from Rattus norvegicus (Rat).